A 196-amino-acid polypeptide reads, in one-letter code: Ribonuclease HII (196 aa).

The RNase H type-2 domain maps to Arg9–Glu196. The a divalent metal cation site is built by Asp15, Glu16, and Asp107.

The protein belongs to the RNase HII family. Requires Mn(2+) as cofactor. Mg(2+) serves as cofactor.

The protein resides in the cytoplasm. The catalysed reaction is Endonucleolytic cleavage to 5'-phosphomonoester.. Functionally, endonuclease that specifically degrades the RNA of RNA-DNA hybrids. The sequence is that of Ribonuclease HII from Aeromonas hydrophila subsp. hydrophila (strain ATCC 7966 / DSM 30187 / BCRC 13018 / CCUG 14551 / JCM 1027 / KCTC 2358 / NCIMB 9240 / NCTC 8049).